A 950-amino-acid polypeptide reads, in one-letter code: Leucine--tRNA ligase (950 aa).

The short motif at 72-83 (PYPSGEGLHVGH) is the 'HIGH' region element. A 'KMSKS' region motif is present at residues 722–726 (KIGKS). An ATP-binding site is contributed by Lys-725.

Belongs to the class-I aminoacyl-tRNA synthetase family.

It localises to the cytoplasm. It catalyses the reaction tRNA(Leu) + L-leucine + ATP = L-leucyl-tRNA(Leu) + AMP + diphosphate. The sequence is that of Leucine--tRNA ligase from Mycobacterium sp. (strain KMS).